Reading from the N-terminus, the 256-residue chain is Enolase-phosphatase E1 (256 aa).

Mg(2+)-binding residues include aspartate 14 and glutamate 16. Residues 142–143 (SS) and lysine 176 contribute to the substrate site. A Mg(2+)-binding site is contributed by aspartate 201.

The protein belongs to the HAD-like hydrolase superfamily. MasA/MtnC family. In terms of assembly, monomer. The cofactor is Mg(2+).

Its subcellular location is the cytoplasm. The protein localises to the nucleus. It catalyses the reaction 5-methylsulfanyl-2,3-dioxopentyl phosphate + H2O = 1,2-dihydroxy-5-(methylsulfanyl)pent-1-en-3-one + phosphate. It functions in the pathway amino-acid biosynthesis; L-methionine biosynthesis via salvage pathway; L-methionine from S-methyl-5-thio-alpha-D-ribose 1-phosphate: step 3/6. The protein operates within amino-acid biosynthesis; L-methionine biosynthesis via salvage pathway; L-methionine from S-methyl-5-thio-alpha-D-ribose 1-phosphate: step 4/6. Its function is as follows. Bifunctional enzyme that catalyzes the enolization of 2,3-diketo-5-methylthiopentyl-1-phosphate (DK-MTP-1-P) into the intermediate 2-hydroxy-3-keto-5-methylthiopentenyl-1-phosphate (HK-MTPenyl-1-P), which is then dephosphorylated to form the acireductone 1,2-dihydroxy-3-keto-5-methylthiopentene (DHK-MTPene). The sequence is that of Enolase-phosphatase E1 from Drosophila sechellia (Fruit fly).